Here is a 318-residue protein sequence, read N- to C-terminus: Aspartate carbamoyltransferase catalytic subunit (318 aa).

Positions 59 and 60 each coordinate carbamoyl phosphate. Lys-87 is a binding site for L-aspartate. Residues Arg-109, His-137, and Gln-140 each coordinate carbamoyl phosphate. Residues Arg-170 and Arg-224 each coordinate L-aspartate. Residues Gly-265 and Pro-266 each coordinate carbamoyl phosphate.

This sequence belongs to the aspartate/ornithine carbamoyltransferase superfamily. ATCase family. Heterododecamer (2C3:3R2) of six catalytic PyrB chains organized as two trimers (C3), and six regulatory PyrI chains organized as three dimers (R2).

It carries out the reaction carbamoyl phosphate + L-aspartate = N-carbamoyl-L-aspartate + phosphate + H(+). It participates in pyrimidine metabolism; UMP biosynthesis via de novo pathway; (S)-dihydroorotate from bicarbonate: step 2/3. In terms of biological role, catalyzes the condensation of carbamoyl phosphate and aspartate to form carbamoyl aspartate and inorganic phosphate, the committed step in the de novo pyrimidine nucleotide biosynthesis pathway. This chain is Aspartate carbamoyltransferase catalytic subunit, found in Rhizobium etli (strain CIAT 652).